Consider the following 588-residue polypeptide: Hyaluronan synthase 1 (588 aa).

The Cytoplasmic segment spans residues 1–28; it reads MKEKAAETMEIPEGIPKDLEPKHPTLWR. A helical membrane pass occupies residues 29–49; it reads IIYYSFGVVLLATITAAYVAE. At 50–61 the chain is on the extracellular side; that stretch reads FQVLKHEAILFS. Residues 62–82 form a helical membrane-spanning segment; it reads LGLYGLAMLLHLMMQSLFAFL. The Cytoplasmic portion of the chain corresponds to 83-411; sequence EIRRVNKSEL…IWMTYESVVS (329 aa). Residues 412–432 form a helical membrane-spanning segment; that stretch reads FIFPFFITATVIRLIYAGTIW. Position 433 (Asn433) is a topological domain, extracellular. A helical membrane pass occupies residues 434 to 454; that stretch reads VVWLLLCIQIMSLFKSIYACW. The Cytoplasmic portion of the chain corresponds to 455-456; the sequence is LR. The chain crosses the membrane as a helical span at residues 457-477; the sequence is GNFIMLLMSLYSMLYMTGLLP. Residues 478-505 are Extracellular-facing; sequence SKYFALLTLNKTGWGTSGRKKIVGNYMP. The chain crosses the membrane as a helical span at residues 506 to 526; it reads ILPLSIWAAVLCGGVGYSIYM. The Cytoplasmic segment spans residues 527–543; sequence DCQNDWSTPEKQKEMYH. Residues 544 to 564 form a helical membrane-spanning segment; that stretch reads LLYGCVGYVMYWVIMAVMYWV. Topologically, residues 565-588 are extracellular; that stretch reads WVKRCCRKRSQTVTLVHDIPDMCV.

This sequence belongs to the NodC/HAS family. Mg(2+) is required as a cofactor. In terms of tissue distribution, expression moves as a gradient through the embryo. The mRNA is first expressed in the animal region of the blastula, and by early gastrula is found everywhere except in the outer layer of the dorsal blastopore lip. By mid-gastrula, protein is present in the inner ectodermal layer and the endoderm, then disappears from dorsal ectoderm as the neural plate is induced and later decays in a dorsoventral direction. Last expressed in ventral regions of the gut at the tailbud stage (at protein level).

The protein localises to the membrane. It carries out the reaction [hyaluronan](n) + UDP-N-acetyl-alpha-D-glucosamine = N-acetyl-beta-D-glucosaminyl-(1-&gt;4)-[hyaluronan](n) + UDP + H(+). The catalysed reaction is N-acetyl-beta-D-glucosaminyl-(1-&gt;4)-[hyaluronan](n) + UDP-alpha-D-glucuronate = [hyaluronan](n+1) + UDP + H(+). It functions in the pathway glycan biosynthesis; hyaluronan biosynthesis. Functionally, catalyzes the addition of GlcNAc or GlcUA monosaccharides to the nascent hyaluronan polymer. Therefore, it is essential to hyaluronan synthesis a major component of most extracellular matrices that has a structural role in tissues architectures and regulates cell adhesion, migration and differentiation. Also able to catalyze the synthesis of chito-oligosaccharide depending on the substrate. The polypeptide is Hyaluronan synthase 1 (has1) (Xenopus laevis (African clawed frog)).